A 473-amino-acid chain; its full sequence is Photosystem II CP43 reaction center protein (473 aa).

Positions 1–14 are excised as a propeptide; sequence MKILYSLRRFYHVE. T15 is subject to N-acetylthreonine. T15 is modified (phosphothreonine). Transmembrane regions (helical) follow at residues 69–93, 134–155, 178–200, 255–275, and 291–312; these read LFEV…PHLA, LLGP…KDRN, KALY…RKIT, KPFA…LSYS, and WFNN…ASQA. Residue E367 participates in [CaMn4O5] cluster binding. The chain crosses the membrane as a helical span at residues 447–471; that stretch reads RARAAAAGFEKGIDRDLEPVLYMNP.

It belongs to the PsbB/PsbC family. PsbC subfamily. PSII is composed of 1 copy each of membrane proteins PsbA, PsbB, PsbC, PsbD, PsbE, PsbF, PsbH, PsbI, PsbJ, PsbK, PsbL, PsbM, PsbT, PsbX, PsbY, PsbZ, Psb30/Ycf12, at least 3 peripheral proteins of the oxygen-evolving complex and a large number of cofactors. It forms dimeric complexes. Requires Binds multiple chlorophylls and provides some of the ligands for the Ca-4Mn-5O cluster of the oxygen-evolving complex. It may also provide a ligand for a Cl- that is required for oxygen evolution. PSII binds additional chlorophylls, carotenoids and specific lipids. as cofactor.

It localises to the plastid. It is found in the chloroplast thylakoid membrane. In terms of biological role, one of the components of the core complex of photosystem II (PSII). It binds chlorophyll and helps catalyze the primary light-induced photochemical processes of PSII. PSII is a light-driven water:plastoquinone oxidoreductase, using light energy to abstract electrons from H(2)O, generating O(2) and a proton gradient subsequently used for ATP formation. This Hordeum vulgare (Barley) protein is Photosystem II CP43 reaction center protein.